The following is a 92-amino-acid chain: Small ribosomal subunit protein uS19c (92 aa).

Belongs to the universal ribosomal protein uS19 family.

It localises to the plastid. It is found in the chloroplast. Its function is as follows. Protein S19 forms a complex with S13 that binds strongly to the 16S ribosomal RNA. The polypeptide is Small ribosomal subunit protein uS19c (Acorus calamus (Sweet flag)).